Consider the following 293-residue polypeptide: Bifunctional protein FolD 1 (293 aa).

Residues 174–176 and Thr-240 each bind NADP(+); that span reads GRS.

This sequence belongs to the tetrahydrofolate dehydrogenase/cyclohydrolase family. As to quaternary structure, homodimer.

It catalyses the reaction (6R)-5,10-methylene-5,6,7,8-tetrahydrofolate + NADP(+) = (6R)-5,10-methenyltetrahydrofolate + NADPH. It carries out the reaction (6R)-5,10-methenyltetrahydrofolate + H2O = (6R)-10-formyltetrahydrofolate + H(+). The protein operates within one-carbon metabolism; tetrahydrofolate interconversion. Catalyzes the oxidation of 5,10-methylenetetrahydrofolate to 5,10-methenyltetrahydrofolate and then the hydrolysis of 5,10-methenyltetrahydrofolate to 10-formyltetrahydrofolate. In Saccharopolyspora erythraea (strain ATCC 11635 / DSM 40517 / JCM 4748 / NBRC 13426 / NCIMB 8594 / NRRL 2338), this protein is Bifunctional protein FolD 1.